Here is a 75-residue protein sequence, read N- to C-terminus: RNA-binding protein KhpA (75 aa).

One can recognise a KH domain in the interval 29–75 (SIILELKVAPEDMGKVIGKQGRIAKAIRTVIKAAAVKENKRVVVEII).

It belongs to the KhpA RNA-binding protein family. Forms a complex with KhpB.

It is found in the cytoplasm. In terms of biological role, a probable RNA chaperone. Forms a complex with KhpB which binds to cellular RNA and controls its expression. Plays a role in peptidoglycan (PG) homeostasis and cell length regulation. The protein is RNA-binding protein KhpA of Clostridium acetobutylicum (strain ATCC 824 / DSM 792 / JCM 1419 / IAM 19013 / LMG 5710 / NBRC 13948 / NRRL B-527 / VKM B-1787 / 2291 / W).